A 75-amino-acid polypeptide reads, in one-letter code: UPF0346 protein LSL_0716 (75 aa).

It belongs to the UPF0346 family.

This chain is UPF0346 protein LSL_0716, found in Ligilactobacillus salivarius (strain UCC118) (Lactobacillus salivarius).